A 215-amino-acid chain; its full sequence is Lysozyme-like protein 5 (215 aa).

Residues 1–17 (MKHFFITILLFCSVVSA) form the signal peptide. Positions 18–215 (ARNGIDINSP…GVSVDMNYIP (198 aa)) constitute a Ch-type lysozyme domain. Active-site residues include Asp-23, Asp-113, and Glu-115.

It belongs to the glycosyl hydrolase 25 family.

Its function is as follows. Plays a role in resistance to Gram-positive bacteria S.aureus or B.thuringiensis infection. The polypeptide is Lysozyme-like protein 5 (Caenorhabditis elegans).